Here is a 309-residue protein sequence, read N- to C-terminus: Thiamine-monophosphate kinase (309 aa).

4 residues coordinate Mg(2+): aspartate 25, threonine 39, serine 40, and aspartate 41. Aspartate 48 provides a ligand contact to substrate. Mg(2+) is bound by residues aspartate 69 and aspartate 117. ATP-binding positions include 116–117 (GD) and arginine 140. Aspartate 201 is a binding site for Mg(2+). Serine 203 lines the ATP pocket. Aspartate 204 provides a ligand contact to Mg(2+). Residues glutamate 250 and tryptophan 298 each contribute to the substrate site.

It belongs to the thiamine-monophosphate kinase family.

The enzyme catalyses thiamine phosphate + ATP = thiamine diphosphate + ADP. It participates in cofactor biosynthesis; thiamine diphosphate biosynthesis; thiamine diphosphate from thiamine phosphate: step 1/1. Catalyzes the ATP-dependent phosphorylation of thiamine-monophosphate (TMP) to form thiamine-pyrophosphate (TPP), the active form of vitamin B1. This chain is Thiamine-monophosphate kinase, found in Pyrococcus horikoshii (strain ATCC 700860 / DSM 12428 / JCM 9974 / NBRC 100139 / OT-3).